Consider the following 321-residue polypeptide: Low affinity immunoglobulin epsilon Fc receptor (321 aa).

Over 1 to 21 the chain is Cytoplasmic; sequence MEEGQYSEIEELPRRRCCRRG. 2 S-palmitoyl cysteine lipidation sites follow: Cys17 and Cys18. The chain crosses the membrane as a helical; Signal-anchor for type II membrane protein span at residues 22–47; it reads TQIVLLGLVTAALWAGLLTLLLLWHW. The Extracellular portion of the chain corresponds to 48-321; sequence DTTQSLKQLE…LPTPSAPLHS (274 aa). Residue Asn63 is glycosylated (N-linked (GlcNAc...) asparagine). Residues 66 to 85 form a disordered region; sequence QVSKNLESHHGDQMAQKSQS. 3 repeats span residues 69-89, 90-110, and 111-131; these read KNLE…TQIS, QELE…LELS, and WNLN…LNER. 4 disulfides stabilise this stretch: Cys160/Cys288, Cys163/Cys174, Cys191/Cys282, and Cys259/Cys273. The C-type lectin domain occupies 162 to 284; the sequence is TCPEKWINFQ…RKLGAWVCDR (123 aa). Residues Glu249, Thr251, Asn269, and Asp270 each contribute to the Ca(2+) site. Residues 290-321 form a disordered region; sequence PPASEGSAESMGPDSRPDPDGRLPTPSAPLHS. The O-linked (Xyl...) (chondroitin sulfate) serine glycan is linked to Ser296.

Homotrimer. Interacts (via C-type lectin domain) with IGHE (via CH3 region); this interaction regulates IgE homeostasis. Interacts (via the C-terminus) with CR2/CD21 (via Sushi domain 1 and 2). Post-translationally, N- and O-glycosylated. The secreted form sCD23 is produced by ADAM10-mediated ectodomain shedding. As to expression, detected in urine (at protein level).

Its subcellular location is the cell membrane. The protein resides in the secreted. Functionally, low-affinity receptor for immunoglobulin E (IgE) and CR2/CD21. Has essential roles in the regulation of IgE production and in the differentiation of B cells. On B cells, initiates IgE-dependent antigen uptake and presentation to T cells. On macrophages, upon IgE binding and antigen cross-linking induces intracellular killing of parasites through activation of L-Arginine-nitric oxide pathway. This Homo sapiens (Human) protein is Low affinity immunoglobulin epsilon Fc receptor (FCER2).